A 107-amino-acid chain; its full sequence is Large ribosomal subunit protein bL21c (107 aa).

This sequence belongs to the bacterial ribosomal protein bL21 family. In terms of assembly, part of the 50S ribosomal subunit.

It localises to the plastid. The protein resides in the chloroplast. This protein binds to 23S rRNA. The protein is Large ribosomal subunit protein bL21c of Cyanidioschyzon merolae (strain NIES-3377 / 10D) (Unicellular red alga).